The following is a 229-amino-acid chain: Potassium/proton antiporter CemA (229 aa).

3 helical membrane passes run 7–27 (FTPLLYLASIIFLPWWISLSF), 107–127 (ILHFSTNIICFIILSGYSLLG), and 189–209 (IISGLVSTFPVILDTIFKYWI).

Belongs to the CemA family.

It localises to the plastid. The protein resides in the chloroplast inner membrane. It carries out the reaction K(+)(in) + H(+)(out) = K(+)(out) + H(+)(in). Functionally, contributes to K(+)/H(+) antiport activity by supporting proton efflux to control proton extrusion and homeostasis in chloroplasts in a light-dependent manner to modulate photosynthesis. Prevents excessive induction of non-photochemical quenching (NPQ) under continuous-light conditions. Indirectly promotes efficient inorganic carbon uptake into chloroplasts. The polypeptide is Potassium/proton antiporter CemA (Lactuca sativa (Garden lettuce)).